Reading from the N-terminus, the 324-residue chain is Histidine N-acetyltransferase (324 aa).

In terms of domain architecture, N-acetyltransferase spans F15–P151.

The enzyme catalyses L-histidine + acetyl-CoA = N(alpha)-acetyl-L-histidine + CoA + H(+). Its function is as follows. Enzyme responsible for the N-acetyl-histidine (NAH) synthesis, which is a major constituent of brain and lens of ectothermic vertebrates. This chain is Histidine N-acetyltransferase (hisat), found in Xenopus tropicalis (Western clawed frog).